The chain runs to 834 residues: Inner nuclear membrane protein SRC1 (834 aa).

The tract at residues 68 to 292 is disordered; that stretch reads DEGIVKMDRP…TANGTGHSTP (225 aa). The segment covering 77 to 86 has biased composition (low complexity); that stretch reads PSSSPSIASP. Phosphoserine occurs at positions 78, 80, and 85. Acidic residues-rich tracts occupy residues 114 to 127 and 142 to 153; these read VSNDDDDDDDDDDD and DTDEVDDEEDDV. Over residues 154–170 the composition is skewed to polar residues; that stretch reads ITSSSNKSDTNDFQQNS. Ser181 is modified (phosphoserine). A compositionally biased stretch (basic and acidic residues) spans 188 to 198; sequence NSKENKIDNKH. A phosphoserine mark is found at Ser203, Ser204, and Ser206. Residues 243–266 are compositionally biased toward polar residues; that stretch reads IKNTNRKPVSMDNFNDSLTSSGTE. Ser301 is modified (phosphoserine). Residues 307–364 form a disordered region; that stretch reads PQKEVPSTILVPEVEQQEPSQSERTPSLFSSEGSGSESEAPLLPEITTPGPHQPMGNT. Low complexity-rich tracts occupy residues 317–329 and 336–345; these read VPEVEQQEPSQSE and SSEGSGSESE. Phosphothreonine is present on Thr394. Residue Ser427 is modified to Phosphoserine. The next 2 membrane-spanning stretches (helical) occupy residues 455-475 and 708-728; these read LLALFLFCIFIVIPLLFGLWY and IWLMFLLIVISKVIEIKLKNY.

The protein localises to the nucleus inner membrane. Plays a role in sister chromatid separation. The chain is Inner nuclear membrane protein SRC1 (SRC1) from Saccharomyces cerevisiae (strain ATCC 204508 / S288c) (Baker's yeast).